Consider the following 177-residue polypeptide: Large ribosomal subunit protein uL10 (177 aa).

This sequence belongs to the universal ribosomal protein uL10 family. In terms of assembly, part of the ribosomal stalk of the 50S ribosomal subunit. The N-terminus interacts with L11 and the large rRNA to form the base of the stalk. The C-terminus forms an elongated spine to which L12 dimers bind in a sequential fashion forming a multimeric L10(L12)X complex.

Forms part of the ribosomal stalk, playing a central role in the interaction of the ribosome with GTP-bound translation factors. The protein is Large ribosomal subunit protein uL10 of Thermoanaerobacter pseudethanolicus (strain ATCC 33223 / 39E) (Clostridium thermohydrosulfuricum).